A 284-amino-acid polypeptide reads, in one-letter code: RNase adapter protein RapZ (284 aa).

Glycine 8–serine 15 contacts ATP. Aspartate 56–asparagine 59 is a GTP binding site. An RNA-binding region spans residues arginine 266–serine 284.

This sequence belongs to the RapZ-like family. RapZ subfamily. As to quaternary structure, homotrimer.

Its function is as follows. Modulates the synthesis of GlmS, by affecting the processing and stability of the regulatory small RNA GlmZ. When glucosamine-6-phosphate (GlcN6P) concentrations are high in the cell, RapZ binds GlmZ and targets it to cleavage by RNase E. Consequently, GlmZ is inactivated and unable to activate GlmS synthesis. Under low GlcN6P concentrations, RapZ is sequestered and inactivated by an other regulatory small RNA, GlmY, preventing GlmZ degradation and leading to synthesis of GlmS. This Cronobacter sakazakii (strain ATCC BAA-894) (Enterobacter sakazakii) protein is RNase adapter protein RapZ.